Here is a 349-residue protein sequence, read N- to C-terminus: Anthranilate phosphoribosyltransferase (349 aa).

5-phospho-alpha-D-ribose 1-diphosphate is bound by residues Gly-82, 85–86 (GD), 92–95 (NVST), 110–118 (KHGNRAVSG), and Ser-122. Anthranilate is bound at residue Gly-82. Position 94 (Ser-94) interacts with Mg(2+). Asn-113 provides a ligand contact to anthranilate. Anthranilate is bound at residue Arg-168. Mg(2+)-binding residues include Asp-227 and Glu-228.

Belongs to the anthranilate phosphoribosyltransferase family. As to quaternary structure, homodimer. Mg(2+) serves as cofactor.

The catalysed reaction is N-(5-phospho-beta-D-ribosyl)anthranilate + diphosphate = 5-phospho-alpha-D-ribose 1-diphosphate + anthranilate. The protein operates within amino-acid biosynthesis; L-tryptophan biosynthesis; L-tryptophan from chorismate: step 2/5. Functionally, catalyzes the transfer of the phosphoribosyl group of 5-phosphorylribose-1-pyrophosphate (PRPP) to anthranilate to yield N-(5'-phosphoribosyl)-anthranilate (PRA). This is Anthranilate phosphoribosyltransferase from Pseudomonas fluorescens (strain Pf0-1).